The chain runs to 230 residues: NAD(P)H-hydrate epimerase (230 aa).

Positions 11-218 (AIAVDQELFN…ALQRKYELNL (208 aa)) constitute a YjeF N-terminal domain. (6S)-NADPHX is bound at residue 61-65 (NNGGD). K(+)-binding residues include N62 and D126. (6S)-NADPHX contacts are provided by residues 130 to 136 (GFSFKPP) and D159. Residue S162 coordinates K(+).

This sequence belongs to the NnrE/AIBP family. The cofactor is K(+).

It catalyses the reaction (6R)-NADHX = (6S)-NADHX. It carries out the reaction (6R)-NADPHX = (6S)-NADPHX. In terms of biological role, catalyzes the epimerization of the S- and R-forms of NAD(P)HX, a damaged form of NAD(P)H that is a result of enzymatic or heat-dependent hydration. This is a prerequisite for the S-specific NAD(P)H-hydrate dehydratase to allow the repair of both epimers of NAD(P)HX. The sequence is that of NAD(P)H-hydrate epimerase from Drosophila sechellia (Fruit fly).